The following is a 613-amino-acid chain: Tetratricopeptide repeat protein 39A (613 aa).

TPR repeat units follow at residues 315–348 (AIFL…QQHW), 505–538 (CLVK…EKKI), and 546–579 (PNAL…YKNY).

Belongs to the TTC39 family.

This is Tetratricopeptide repeat protein 39A (TTC39A) from Homo sapiens (Human).